The sequence spans 468 residues: ATP synthase subunit beta (468 aa).

Residue 155–162 (GGAGVGKT) coordinates ATP.

The protein belongs to the ATPase alpha/beta chains family. As to quaternary structure, F-type ATPases have 2 components, CF(1) - the catalytic core - and CF(0) - the membrane proton channel. CF(1) has five subunits: alpha(3), beta(3), gamma(1), delta(1), epsilon(1). CF(0) has three main subunits: a(1), b(2) and c(9-12). The alpha and beta chains form an alternating ring which encloses part of the gamma chain. CF(1) is attached to CF(0) by a central stalk formed by the gamma and epsilon chains, while a peripheral stalk is formed by the delta and b chains.

The protein localises to the cell membrane. It carries out the reaction ATP + H2O + 4 H(+)(in) = ADP + phosphate + 5 H(+)(out). Its function is as follows. Produces ATP from ADP in the presence of a proton gradient across the membrane. The catalytic sites are hosted primarily by the beta subunits. The sequence is that of ATP synthase subunit beta from Enterococcus hirae (strain ATCC 9790 / DSM 20160 / JCM 8729 / LMG 6399 / NBRC 3181 / NCIMB 6459 / NCDO 1258 / NCTC 12367 / WDCM 00089 / R).